The following is a 293-amino-acid chain: Bifunctional protein FolD (293 aa).

NADP(+)-binding positions include 164–166 (GRS), S193, and T234.

It belongs to the tetrahydrofolate dehydrogenase/cyclohydrolase family. As to quaternary structure, homodimer.

It carries out the reaction (6R)-5,10-methylene-5,6,7,8-tetrahydrofolate + NADP(+) = (6R)-5,10-methenyltetrahydrofolate + NADPH. The catalysed reaction is (6R)-5,10-methenyltetrahydrofolate + H2O = (6R)-10-formyltetrahydrofolate + H(+). It functions in the pathway one-carbon metabolism; tetrahydrofolate interconversion. Catalyzes the oxidation of 5,10-methylenetetrahydrofolate to 5,10-methenyltetrahydrofolate and then the hydrolysis of 5,10-methenyltetrahydrofolate to 10-formyltetrahydrofolate. This is Bifunctional protein FolD from Bacteroides fragilis (strain ATCC 25285 / DSM 2151 / CCUG 4856 / JCM 11019 / LMG 10263 / NCTC 9343 / Onslow / VPI 2553 / EN-2).